Consider the following 296-residue polypeptide: NAD kinase (296 aa).

The Proton acceptor role is filled by Asp74. Residues 74-75 (DG), 148-149 (ND), Arg176, Asp178, and 189-194 (TAYALS) each bind NAD(+).

Belongs to the NAD kinase family. A divalent metal cation is required as a cofactor.

The protein localises to the cytoplasm. The enzyme catalyses NAD(+) + ATP = ADP + NADP(+) + H(+). Functionally, involved in the regulation of the intracellular balance of NAD and NADP, and is a key enzyme in the biosynthesis of NADP. Catalyzes specifically the phosphorylation on 2'-hydroxyl of the adenosine moiety of NAD to yield NADP. The sequence is that of NAD kinase from Nitrosomonas europaea (strain ATCC 19718 / CIP 103999 / KCTC 2705 / NBRC 14298).